Here is an 80-residue protein sequence, read N- to C-terminus: Metallothionein-like protein type 2 MET1 (80 aa).

Belongs to the metallothionein superfamily. Type 15 family.

Functionally, metallothioneins have a high content of cysteine residues that bind various heavy metals. The chain is Metallothionein-like protein type 2 MET1 (MET1) from Fragaria ananassa (Strawberry).